A 95-amino-acid polypeptide reads, in one-letter code: Large ribosomal subunit protein uL23 (95 aa).

The protein belongs to the universal ribosomal protein uL23 family. In terms of assembly, part of the 50S ribosomal subunit. Contacts protein L29, and trigger factor when it is bound to the ribosome.

Functionally, one of the early assembly proteins it binds 23S rRNA. One of the proteins that surrounds the polypeptide exit tunnel on the outside of the ribosome. Forms the main docking site for trigger factor binding to the ribosome. The polypeptide is Large ribosomal subunit protein uL23 (Anoxybacillus flavithermus (strain DSM 21510 / WK1)).